The following is a 410-amino-acid chain: Peptidase T (410 aa).

Zn(2+) is bound at residue His-79. Asp-81 is an active-site residue. Asp-142 contacts Zn(2+). Glu-176 (proton acceptor) is an active-site residue. Residues Glu-177, Asp-199, and His-381 each coordinate Zn(2+).

It belongs to the peptidase M20B family. Requires Zn(2+) as cofactor.

It is found in the cytoplasm. It catalyses the reaction Release of the N-terminal residue from a tripeptide.. Cleaves the N-terminal amino acid of tripeptides. The chain is Peptidase T from Geobacillus sp. (strain WCH70).